Here is a 294-residue protein sequence, read N- to C-terminus: Store-operated calcium entry regulator STIMATE (294 aa).

The disordered stretch occupies residues 1–22 (MQGPAGNASRGLPGGPPSTVAS). The Cytoplasmic segment spans residues 1–28 (MQGPAGNASRGLPGGPPSTVASGAGRCE). The next 3 membrane-spanning stretches (helical) occupy residues 29-49 (SGALMHSFGIFLQGLLGVVAF), 69-89 (IWFLDTSKQAIGMLFIHFANV), and 102-122 (LYLINFLLDATVGMLLIYVGV). The short motif at 149-153 (GAWVG) is the GXXXG motif element. 2 helical membrane passes run 156 to 176 (ALYIVIMIFEKSVVFIVLLIL) and 194 to 214 (LAIVMLIVPFFVNALMFWVVD). The Cytoplasmic segment spans residues 215 to 294 (NFLMRKGKTK…KKKHRFGLPV (80 aa)). The segment at 227-268 (LEERGANQDSRNGSKVRYRRAASHEESESEILISADDEMEES) is disordered. The tract at residues 241–246 (KVRYRR) is required for localization in the endoplasmic reticulum.

It belongs to the STIMATE family. In terms of assembly, homooligomer. Interacts with STIM1. As to expression, widely expressed.

The protein resides in the endoplasmic reticulum membrane. Functionally, acts as a regulator of store-operated Ca(2+) entry (SOCE) at junctional sites that connect the endoplasmic reticulum (ER) and plasma membrane (PM), called ER-plasma membrane (ER-PM) junction or cortical ER. SOCE is a Ca(2+) influx following depletion of intracellular Ca(2+) stores. Acts by interacting with STIM1, promoting STIM1 conformational switch. Involved in STIM1 relocalization to ER-PM junctions. Contributes to the maintenance and reorganization of store-dependent ER-PM junctions. The sequence is that of Store-operated calcium entry regulator STIMATE from Homo sapiens (Human).